We begin with the raw amino-acid sequence, 434 residues long: 3-phosphoshikimate 1-carboxyvinyltransferase (434 aa).

Positions 22, 23, and 27 each coordinate 3-phosphoshikimate. Residue K22 coordinates phosphoenolpyruvate. Phosphoenolpyruvate-binding residues include G93 and R121. Residues S168, S169, Q170, S199, D320, and K347 each coordinate 3-phosphoshikimate. Q170 contacts phosphoenolpyruvate. The Proton acceptor role is filled by D320. Phosphoenolpyruvate contacts are provided by R351, R394, and K419.

The protein belongs to the EPSP synthase family. In terms of assembly, monomer.

It is found in the cytoplasm. The catalysed reaction is 3-phosphoshikimate + phosphoenolpyruvate = 5-O-(1-carboxyvinyl)-3-phosphoshikimate + phosphate. It participates in metabolic intermediate biosynthesis; chorismate biosynthesis; chorismate from D-erythrose 4-phosphate and phosphoenolpyruvate: step 6/7. Functionally, catalyzes the transfer of the enolpyruvyl moiety of phosphoenolpyruvate (PEP) to the 5-hydroxyl of shikimate-3-phosphate (S3P) to produce enolpyruvyl shikimate-3-phosphate and inorganic phosphate. This Paraburkholderia phytofirmans (strain DSM 17436 / LMG 22146 / PsJN) (Burkholderia phytofirmans) protein is 3-phosphoshikimate 1-carboxyvinyltransferase.